We begin with the raw amino-acid sequence, 397 residues long: Succinate--CoA ligase [ADP-forming] subunit beta (397 aa).

Residues 9 to 254 form the ATP-grasp domain; it reads KALLRSYGAP…ETEEDPKELA (246 aa). ATP contacts are provided by residues Lys46, 53-55, Glu109, Ser112, and Glu117; that span reads GRG. Residues Asn209 and Asp223 each contribute to the Mg(2+) site. Substrate is bound by residues Asn274 and 331 to 333; that span reads GIM.

The protein belongs to the succinate/malate CoA ligase beta subunit family. In terms of assembly, heterotetramer of two alpha and two beta subunits. Mg(2+) is required as a cofactor.

It carries out the reaction succinate + ATP + CoA = succinyl-CoA + ADP + phosphate. The enzyme catalyses GTP + succinate + CoA = succinyl-CoA + GDP + phosphate. The protein operates within carbohydrate metabolism; tricarboxylic acid cycle; succinate from succinyl-CoA (ligase route): step 1/1. Functionally, succinyl-CoA synthetase functions in the citric acid cycle (TCA), coupling the hydrolysis of succinyl-CoA to the synthesis of either ATP or GTP and thus represents the only step of substrate-level phosphorylation in the TCA. The beta subunit provides nucleotide specificity of the enzyme and binds the substrate succinate, while the binding sites for coenzyme A and phosphate are found in the alpha subunit. The sequence is that of Succinate--CoA ligase [ADP-forming] subunit beta from Cereibacter sphaeroides (strain ATCC 17029 / ATH 2.4.9) (Rhodobacter sphaeroides).